The primary structure comprises 206 residues: Probable chemoreceptor glutamine deamidase CheD (206 aa).

Belongs to the CheD family.

It catalyses the reaction L-glutaminyl-[protein] + H2O = L-glutamyl-[protein] + NH4(+). Probably deamidates glutamine residues to glutamate on methyl-accepting chemotaxis receptors (MCPs), playing an important role in chemotaxis. The sequence is that of Probable chemoreceptor glutamine deamidase CheD from Laribacter hongkongensis (strain HLHK9).